The sequence spans 354 residues: Homeobox-leucine zipper protein HOX27 (354 aa).

The tract at residues 98–175 is disordered; it reads SVAAGAPGME…DDEGASARKK (78 aa). The span at 148-157 shows a compositional bias: gly residues; the sequence is QGGGGGGGGE. A DNA-binding region (homeobox) is located at residues 171 to 230; it reads SARKKLRLSKEQSAFLEESFKEHSTLNPKQKVALAKQLNLRPRQVEVWFQNRRARTKLKQ. Positions 229-273 are leucine-zipper; the sequence is KQTEVDCEYLKRCCETLTEENRRLHKELAELRALKTARPFYMHLP. The interval 294 to 323 is disordered; the sequence is STSAPAAATSPAAAPTAAARTAVASPEPHR.

This sequence belongs to the HD-ZIP homeobox family. Class II subfamily. In terms of tissue distribution, expressed in seedlings, roots, stems, leaf sheaths and blades and panicles.

The protein localises to the nucleus. Functionally, probable transcription factor. The polypeptide is Homeobox-leucine zipper protein HOX27 (HOX27) (Oryza sativa subsp. indica (Rice)).